A 232-amino-acid chain; its full sequence is Ribonuclease 3 (232 aa).

The 130-residue stretch at 5-134 (QTVLKNHFAI…FLGALLLDKD (130 aa)) folds into the RNase III domain. A Mg(2+)-binding site is contributed by E47. The active site involves D51. Positions 120 and 123 each coordinate Mg(2+). The active site involves E123. The DRBM domain maps to 160-229 (DYKTHLQELL…AKNAVEKGLD (70 aa)).

It belongs to the ribonuclease III family. As to quaternary structure, homodimer. Mg(2+) serves as cofactor.

It localises to the cytoplasm. It carries out the reaction Endonucleolytic cleavage to 5'-phosphomonoester.. Functionally, digests double-stranded RNA. Involved in the processing of primary rRNA transcript to yield the immediate precursors to the large and small rRNAs (23S and 16S). Processes some mRNAs, and tRNAs when they are encoded in the rRNA operon. Processes pre-crRNA and tracrRNA of type II CRISPR loci if present in the organism. The protein is Ribonuclease 3 of Streptococcus pneumoniae (strain P1031).